The sequence spans 87 residues: Small ribosomal subunit protein bS20 (87 aa).

The interval 1–24 is disordered; the sequence is MANTAQARKRARQSVERNKHNSSL.

Belongs to the bacterial ribosomal protein bS20 family.

Binds directly to 16S ribosomal RNA. The chain is Small ribosomal subunit protein bS20 from Bordetella avium (strain 197N).